We begin with the raw amino-acid sequence, 331 residues long: Ferrochelatase (331 aa).

Histidine 187 and glutamate 286 together coordinate Fe cation.

It belongs to the ferrochelatase family.

It localises to the cytoplasm. It catalyses the reaction heme b + 2 H(+) = protoporphyrin IX + Fe(2+). Its pathway is porphyrin-containing compound metabolism; protoheme biosynthesis; protoheme from protoporphyrin-IX: step 1/1. In terms of biological role, catalyzes the ferrous insertion into protoporphyrin IX. This chain is Ferrochelatase, found in Legionella pneumophila (strain Paris).